The chain runs to 333 residues: Phosphoribosylformylglycinamidine cyclo-ligase (333 aa).

The protein belongs to the AIR synthase family.

Its subcellular location is the cytoplasm. It carries out the reaction 2-formamido-N(1)-(5-O-phospho-beta-D-ribosyl)acetamidine + ATP = 5-amino-1-(5-phospho-beta-D-ribosyl)imidazole + ADP + phosphate + H(+). It functions in the pathway purine metabolism; IMP biosynthesis via de novo pathway; 5-amino-1-(5-phospho-D-ribosyl)imidazole from N(2)-formyl-N(1)-(5-phospho-D-ribosyl)glycinamide: step 2/2. The protein is Phosphoribosylformylglycinamidine cyclo-ligase of Methanosarcina mazei (strain ATCC BAA-159 / DSM 3647 / Goe1 / Go1 / JCM 11833 / OCM 88) (Methanosarcina frisia).